The primary structure comprises 760 residues: General transcription and DNA repair factor IIH helicase subunit XPD (760 aa).

The 277-residue stretch at 7-283 (GLLVYFPYDY…KETDEQRLRD (277 aa)) folds into the Helicase ATP-binding domain. 42-49 (MPSGTGKT) lines the ATP pocket. Residues Cys116, Cys134, Cys155, and Cys190 each contribute to the [4Fe-4S] cluster site. Positions 234-237 (DEAH) match the DEAH box motif. The interval 438-637 (MDASLAIKPV…TQSRILKARL (200 aa)) is mediates interaction with MMS19. A Nuclear localization signal motif is present at residues 682-695 (KRFARGDKRGKLPR).

The protein belongs to the helicase family. RAD3/XPD subfamily. Component of the 7-subunit TFIIH core complex composed of XPB/ERCC3, XPD/ERCC2, GTF2H1, GTF2H2, GTF2H3, GTF2H4 and GTF2H5, which is active in NER. The core complex associates with the 3-subunit CDK-activating kinase (CAK) module composed of CCNH/cyclin H, CDK7 and MNAT1 to form the 10-subunit holoenzyme (holo-TFIIH) active in transcription. Interacts with GTF2H2 (p44) which stimulates the 5'-3' helicase activity of this subunit. Component of the MMXD complex, which includes CIAO1, ERCC2, CIAO2B, MMS19 and SLC25A5. Interacts with CIAO1 and CIAO2B; the interaction WITH CIAO2B is direct. Interacts with ATF7IP. Interacts directly with MMS19. Part of TBP-based Pol II pre-initiation complex (PIC), in which Pol II core assembles with general transcription factors and other specific initiation factors including GTF2E1, GTF2E2, GTF2F1, GTF2F2, TCEA1, ERCC2, ERCC3, GTF2H2, GTF2H3, GTF2H4, GTF2H5, GTF2A1, GTF2A2, GTF2B and TBP; this large multi-subunit PIC complex mediates DNA unwinding and targets Pol II core to the transcription start site where the first phosphodiester bond forms. As to quaternary structure, (Microbial infection) Interacts with Epstein-Barr virus EBNA2. It depends on Mg(2+) as a cofactor. [4Fe-4S] cluster serves as cofactor. Post-translationally, ISGylated.

Its subcellular location is the nucleus. The protein localises to the cytoplasm. It localises to the cytoskeleton. The protein resides in the spindle. It catalyses the reaction Couples ATP hydrolysis with the unwinding of duplex DNA at the replication fork by translocating in the 5'-3' direction. This creates two antiparallel DNA single strands (ssDNA). The leading ssDNA polymer is the template for DNA polymerase III holoenzyme which synthesizes a continuous strand.. The enzyme catalyses ATP + H2O = ADP + phosphate + H(+). With respect to regulation, interaction with GTF2H2 (p44) results in stimulation of the 5'-3' helicase activity of this subunit. DNA unwinding by this subunit in TFIIH is stimulated 4-fold by XPA and 20-fold by ERCC5/XPG. Its function is as follows. ATP-dependent 5'-3' DNA helicase. Component of the general transcription and DNA repair factor IIH (TFIIH) core complex, not absolutely essential for minimal transcription in vitro. Required for transcription-coupled nucleotide excision repair (NER) of damaged DNA; recognizes damaged bases. Sequestered in chromatin on UV-damaged DNA. When complexed to CDK-activating kinase (CAK), involved in transcription by RNA polymerase II. In NER, TFIIH acts by opening DNA around the lesion to allow the excision of the damaged oligonucleotide and its replacement by a new DNA fragment. The ATP-dependent helicase activity of XPD/ERCC2 is required for DNA opening. Involved in DNA lesion verification. In transcription, TFIIH has an essential role in transcription initiation. When the pre-initiation complex (PIC) has been established, TFIIH is required for promoter opening and promoter escape. Phosphorylation of the C-terminal tail (CTD) of the largest subunit of RNA polymerase II by the kinase module CAK controls the initiation of transcription. XPD/ERCC2 acts by forming a bridge between CAK and the core-TFIIH complex. The structure of the TFIIH transcription complex differs from the NER-TFIIH complex; large movements by XPD/ERCC2 and XPB/ERCC3 are stabilized by XPA which allow this subunit to contact ssDNA. Involved in the regulation of vitamin-D receptor activity. As part of the mitotic spindle-associated MMXD complex it plays a role in chromosome segregation. Might have a role in aging process and could play a causative role in the generation of skin cancers. The protein is General transcription and DNA repair factor IIH helicase subunit XPD (ERCC2) of Homo sapiens (Human).